Consider the following 182-residue polypeptide: Dipetalodipin (182 aa).

The N-terminal stretch at 1–18 (MKTIIAAIFLGILMHAFA) is a signal peptide. Disulfide bonds link Cys21-Cys134, Cys55-Cys181, and Cys87-Cys103.

It belongs to the calycin superfamily. Triabin family. In terms of tissue distribution, expressed in salivary glands.

The protein resides in the secreted. Inhibits platelet aggregation, vasoconstriction, and angiogenesis through binding to distinct eicosanoids involved in inflammation (acts as a scavenger), and has a role in inhibiting host innate immunity by impairing platelet-assisted formation of neutrophil extracellular traps (NETs). Inhibits platelet aggregation by collagen (IC(50)=30 nM), thromboxane A2 mimetic (TXA2 mimetic), or arachidonic acid (AA) without affecting aggregation induced by ADP, convulxin (GP6 agonist), PMA, and ristocetin (vWF-dependent platelet agglutinator). Binds with high affinity to TXA2, TXB2, prostaglandine H2 mimetic (PGH2 mimetic), PGD2, PGJ2, and PGF2alpha. Also interacts with 15(S)-hydroxyeicosatetraenoic acid (HETE), being the first calycin/lipocalin described to date to bind to a derivative of 15-lipoxygenase. Binding is not observed to other prostaglandins, leukotrienes, HETEs, lipids, and biogenic amines. It prevents contraction of rat uterus stimulated by PGF2alpha and induces relaxation of aorta previously contracted with TXA2 mimetic. In addition, it inhibits angiogenesis mediated by 15(S)-HETE and does not enhance inhibition of collagen-induced platelet aggregation by SQ29548 (TXA2 antagonist) and indomethacin. Also impairs platelet-assisted formation of neutrophil extracellular traps (NETs). NETs are web-like structures of DNA and proteins that play an important role in killing of pathogens. In addition, NETs are implicated in thrombus formation. In vivo, this protein exhibits antithrombotic activity in two distinct mice models that are highly dependent on platelets. It is noteworthy that it inhibits thrombosis without promoting excessive bleeding. This is Dipetalodipin from Dipetalogaster maximus (Blood-sucking bug).